We begin with the raw amino-acid sequence, 125 residues long: Protein JAZ13 (125 aa).

The short motif at 6–10 (LDLHL) is the EAR element. Residues 99–125 (KKRSKSFTLTPNYTSSTSSSSSSLHNF) form a disordered region. Residues 112–125 (TSSTSSSSSSLHNF) are compositionally biased toward low complexity.

In terms of assembly, monomer. Lack of homodimerization, and very weak or no interaction with AFPH2/NINJA and other JAZ proteins. Interacts (via EAR motif) with TPL. Interacts (via jas motif) with MYC2. In terms of processing, phosphorylated at multiple serine residues.

Functionally, non-TIFY functional repressor of jasmonate (JA)-mediated growth and defense responses. Intrinsically resistant to JA-induced turnover, probably due to the absence of the canonical degron that strongly interacts with COI1 in the presence of JA-Ile in the TIFY/JAZ proteins. This chain is Protein JAZ13, found in Arabidopsis thaliana (Mouse-ear cress).